The following is a 67-amino-acid chain: Sperm protamine P1 (67 aa).

Residues 1–67 form a disordered region; sequence MASYRNSRSR…RRRKRNNENK (67 aa). Basic residues-rich tracts occupy residues 7–25 and 34–67; these read SRSR…RSRV and RSSR…NENK.

This sequence belongs to the protamine P1 family. As to expression, testis.

Its subcellular location is the nucleus. The protein localises to the chromosome. Its function is as follows. Protamines substitute for histones in the chromatin of sperm during the haploid phase of spermatogenesis. They compact sperm DNA into a highly condensed, stable and inactive complex. This Isoodon macrourus (Short-nosed bandicoot) protein is Sperm protamine P1 (PRM1).